Consider the following 712-residue polypeptide: Polyribonucleotide nucleotidyltransferase (712 aa).

Mg(2+) is bound by residues D488 and D494. The KH domain maps to 555–614 (PKIETINIPTDKIREVIGSGGKVIREIVATTGAKVDINDDGVVKVSASDGAKIKAAIDWI). Residues 624 to 692 (GKIYDGKVVK…DRGKTKLSMK (69 aa)) form the S1 motif domain.

Belongs to the polyribonucleotide nucleotidyltransferase family. Requires Mg(2+) as cofactor.

It localises to the cytoplasm. The catalysed reaction is RNA(n+1) + phosphate = RNA(n) + a ribonucleoside 5'-diphosphate. In terms of biological role, involved in mRNA degradation. Catalyzes the phosphorolysis of single-stranded polyribonucleotides processively in the 3'- to 5'-direction. The sequence is that of Polyribonucleotide nucleotidyltransferase from Caulobacter vibrioides (strain NA1000 / CB15N) (Caulobacter crescentus).